An 86-amino-acid chain; its full sequence is MMGKGFEMMVASAIRAAGINPDELMEKANTLVHNLNYQLDRFGQRLDSIDSRLSVIEKALDISPAEKPDNQPELTGITFEGDNNDQ.

The tract at residues 63–86 (SPAEKPDNQPELTGITFEGDNNDQ) is disordered.

In terms of assembly, homotetramer.

Its function is as follows. Assembly protein that acts late in phage assembly, after capsid protein folding and multimerization, and sorting of membrane proteins has occurred. The major coat protein P3 and two assembly factors (P10 and P17) are needed during the assembly of the virus particle inside the host cell, when the capsid protein multimers are capable of enclosing the host-derived membrane, containing the virus-encoded membrane-associated proteins. The protein is Protein P17 (XVII) of Enterobacteria phage PRD1 (Bacteriophage PRD1).